The chain runs to 847 residues: Protein SEY1 (847 aa).

At 1–720 (MSSGEPLSET…KRSIVQHVTQ (720 aa)) the chain is on the cytoplasmic side. Residues 55-290 (GHNYHIVAVF…VENDIFKPEY (236 aa)) form the GB1/RHD3-type G domain. 65-72 (GSQSTGKS) contacts GTP. Residues 721–741 (IPYYIYIIILLLGWNEFMAVV) traverse the membrane as a helical segment. Topologically, residues 742–744 (RNP) are lumenal. Residues 745-765 (FTFSLAIILGASLYILYTMNL) form a helical membrane-spanning segment. At 766-847 (LKPALTVTQR…VTSLNVVEEE (82 aa)) the chain is on the cytoplasmic side.

The protein belongs to the TRAFAC class dynamin-like GTPase superfamily. GB1/RHD3 GTPase family. RHD3 subfamily.

The protein localises to the endoplasmic reticulum membrane. Cooperates with the reticulon proteins and tubule-shaping DP1 family proteins to generate and maintain the structure of the tubular endoplasmic reticulum network. Has GTPase activity, which is required for its function in ER organization. In Lodderomyces elongisporus (strain ATCC 11503 / CBS 2605 / JCM 1781 / NBRC 1676 / NRRL YB-4239) (Yeast), this protein is Protein SEY1.